A 165-amino-acid chain; its full sequence is Protein SprT (165 aa).

The region spanning 22-163 is the SprT-like domain; it reads LAQANLKLGR…RCVHCGEQLT (142 aa). H78 is a Zn(2+) binding site. The active site involves E79. Zn(2+) is bound at residue H82.

It belongs to the SprT family. The cofactor is Zn(2+).

Its subcellular location is the cytoplasm. This Escherichia fergusonii (strain ATCC 35469 / DSM 13698 / CCUG 18766 / IAM 14443 / JCM 21226 / LMG 7866 / NBRC 102419 / NCTC 12128 / CDC 0568-73) protein is Protein SprT.